Consider the following 455-residue polypeptide: Ribulose bisphosphate carboxylase large chain (455 aa).

K5 carries the post-translational modification N6,N6,N6-trimethyllysine. Residues N114 and T164 each contribute to the substrate site. K166 (proton acceptor) is an active-site residue. K168 contributes to the substrate binding site. Mg(2+)-binding residues include K192, D194, and E195. K192 carries the N6-carboxylysine modification. Catalysis depends on H285, which acts as the Proton acceptor. 3 residues coordinate substrate: R286, H318, and S370.

This sequence belongs to the RuBisCO large chain family. Type I subfamily. Heterohexadecamer of 8 large chains and 8 small chains; disulfide-linked. The disulfide link is formed within the large subunit homodimers. Requires Mg(2+) as cofactor. In terms of processing, the disulfide bond which can form in the large chain dimeric partners within the hexadecamer appears to be associated with oxidative stress and protein turnover.

Its subcellular location is the plastid. The protein localises to the chloroplast. It catalyses the reaction 2 (2R)-3-phosphoglycerate + 2 H(+) = D-ribulose 1,5-bisphosphate + CO2 + H2O. The catalysed reaction is D-ribulose 1,5-bisphosphate + O2 = 2-phosphoglycolate + (2R)-3-phosphoglycerate + 2 H(+). Its function is as follows. RuBisCO catalyzes two reactions: the carboxylation of D-ribulose 1,5-bisphosphate, the primary event in carbon dioxide fixation, as well as the oxidative fragmentation of the pentose substrate in the photorespiration process. Both reactions occur simultaneously and in competition at the same active site. This Lupinus paraguariensis (Lupine) protein is Ribulose bisphosphate carboxylase large chain.